Here is a 336-residue protein sequence, read N- to C-terminus: Tryptophan--tRNA ligase (336 aa).

ATP is bound by residues 11-13 and 19-20; these read TTT and GN. A 'HIGH' region motif is present at residues 12-20; sequence TTGIPHLGN. Aspartate 145 provides a ligand contact to L-tryptophan. Residues 157-159, leucine 196, and 203-207 each bind ATP; these read GRD and KMSKS. The 'KMSKS' region signature appears at 203 to 207; the sequence is KMSKS.

It belongs to the class-I aminoacyl-tRNA synthetase family. In terms of assembly, homodimer.

Its subcellular location is the cytoplasm. It carries out the reaction tRNA(Trp) + L-tryptophan + ATP = L-tryptophyl-tRNA(Trp) + AMP + diphosphate + H(+). In terms of biological role, catalyzes the attachment of tryptophan to tRNA(Trp). The chain is Tryptophan--tRNA ligase from Neisseria meningitidis serogroup A / serotype 4A (strain DSM 15465 / Z2491).